The following is a 374-amino-acid chain: RNA polymerase sigma factor SigA (374 aa).

Positions 141-211 (LAEANLRLVV…TRAIADQART (71 aa)) are sigma-70 factor domain-2. Positions 165–168 (DLIQ) match the Interaction with polymerase core subunit RpoC motif. The tract at residues 220-296 (ETINKLIRVQ…DQDATSPSDH (77 aa)) is sigma-70 factor domain-3. The segment at 309 to 362 (VLDTLTDREENVLRLRFGLDDGRTRTLEEVGRVFGVTRERIRQIEAKALRKLRH) is sigma-70 factor domain-4. A DNA-binding region (H-T-H motif) is located at residues 335 to 354 (LEEVGRVFGVTRERIRQIEA).

Belongs to the sigma-70 factor family. RpoD/SigA subfamily. Interacts transiently with the RNA polymerase catalytic core.

The protein resides in the cytoplasm. In terms of biological role, sigma factors are initiation factors that promote the attachment of RNA polymerase to specific initiation sites and are then released. This sigma factor is the primary sigma factor during exponential growth. The sequence is that of RNA polymerase sigma factor SigA from Listeria monocytogenes serovar 1/2a (strain ATCC BAA-679 / EGD-e).